Reading from the N-terminus, the 288-residue chain is Phosphatidylserine decarboxylase proenzyme (288 aa).

Residues aspartate 91, histidine 148, and serine 254 each act as charge relay system; for autoendoproteolytic cleavage activity in the active site. The active-site Schiff-base intermediate with substrate; via pyruvic acid; for decarboxylase activity is the serine 254. Serine 254 is subject to Pyruvic acid (Ser); by autocatalysis.

Belongs to the phosphatidylserine decarboxylase family. PSD-B subfamily. Prokaryotic type I sub-subfamily. In terms of assembly, heterodimer of a large membrane-associated beta subunit and a small pyruvoyl-containing alpha subunit. The cofactor is pyruvate. Post-translationally, is synthesized initially as an inactive proenzyme. Formation of the active enzyme involves a self-maturation process in which the active site pyruvoyl group is generated from an internal serine residue via an autocatalytic post-translational modification. Two non-identical subunits are generated from the proenzyme in this reaction, and the pyruvate is formed at the N-terminus of the alpha chain, which is derived from the carboxyl end of the proenzyme. The autoendoproteolytic cleavage occurs by a canonical serine protease mechanism, in which the side chain hydroxyl group of the serine supplies its oxygen atom to form the C-terminus of the beta chain, while the remainder of the serine residue undergoes an oxidative deamination to produce ammonia and the pyruvoyl prosthetic group on the alpha chain. During this reaction, the Ser that is part of the protease active site of the proenzyme becomes the pyruvoyl prosthetic group, which constitutes an essential element of the active site of the mature decarboxylase.

The protein localises to the cell membrane. The enzyme catalyses a 1,2-diacyl-sn-glycero-3-phospho-L-serine + H(+) = a 1,2-diacyl-sn-glycero-3-phosphoethanolamine + CO2. It participates in phospholipid metabolism; phosphatidylethanolamine biosynthesis; phosphatidylethanolamine from CDP-diacylglycerol: step 2/2. Catalyzes the formation of phosphatidylethanolamine (PtdEtn) from phosphatidylserine (PtdSer). In Pseudoalteromonas translucida (strain TAC 125), this protein is Phosphatidylserine decarboxylase proenzyme.